We begin with the raw amino-acid sequence, 230 residues long: Ion-translocating oxidoreductase complex subunit E (230 aa).

6 helical membrane-spanning segments follow: residues 18 to 38, 39 to 59, 63 to 83, 86 to 106, 125 to 145, and 182 to 202; these read ALVQLLGMCPLLAVTSTATNA, LGLGLATTLVLTLTNLTISAL, TPAEIRIPIYVMIIASVVSAV, LINAYAFGLYQSLGIFIPLIV, ALSALDGFSIGMGATGAMFVL, and PFLLAMLPPGAFIGLGLMLAV.

The protein belongs to the NqrDE/RnfAE family. The complex is composed of six subunits: RnfA, RnfB, RnfC, RnfD, RnfE and RnfG.

It localises to the cell inner membrane. In terms of biological role, part of a membrane-bound complex that couples electron transfer with translocation of ions across the membrane. This is Ion-translocating oxidoreductase complex subunit E from Citrobacter koseri (strain ATCC BAA-895 / CDC 4225-83 / SGSC4696).